Reading from the N-terminus, the 35-residue chain is Pheromone-binding protein 2 (35 aa).

The protein belongs to the PBP/GOBP family. Homodimer. As to expression, antenna.

Functionally, this major soluble protein in olfactory sensilla of male moths might serve to solubilize the extremely hydrophobic pheromone molecules and to transport pheromone through the aqueous lymph to receptors located on olfactory cilia. The polypeptide is Pheromone-binding protein 2 (Lymantria dispar (Gypsy moth)).